A 60-amino-acid chain; its full sequence is Metallothionein A (60 aa).

Residues 1–28 are beta; it reads MDPCECSKSGNCNCGGSCTCTNCSCKSC. Cys-4, Cys-6, Cys-12, Cys-14, Cys-18, Cys-20, Cys-23, Cys-25, Cys-28, Cys-32, Cys-33, Cys-35, Cys-36, Cys-40, Cys-43, Cys-47, Cys-49, Cys-54, Cys-58, and Cys-59 together coordinate a divalent metal cation. An alpha region spans residues 29–60; sequence KKSCCPCCPSGCTKCASGCVCIGKTCDTSCCQ.

The protein belongs to the metallothionein superfamily. Type 1 family.

In terms of biological role, metallothioneins have a high content of cysteine residues that bind various heavy metals. This chain is Metallothionein A (mta), found in Chaenocephalus aceratus (Blackfin icefish).